The chain runs to 286 residues: Polyamine aminopropyltransferase (286 aa).

The 234-residue stretch at 5 to 238 folds into the PABS domain; sequence TMWHETLHDQ…GIMTFAWATD (234 aa). Gln33 contacts S-methyl-5'-thioadenosine. Spermidine-binding residues include His64 and Asp88. Residues Glu108 and 140 to 141 each bind S-methyl-5'-thioadenosine; that span reads DG. Asp158 (proton acceptor) is an active-site residue. Position 158–161 (158–161) interacts with spermidine; it reads DCTD. Pro165 is an S-methyl-5'-thioadenosine binding site.

Belongs to the spermidine/spermine synthase family. Homodimer or homotetramer.

The protein localises to the cytoplasm. It catalyses the reaction S-adenosyl 3-(methylsulfanyl)propylamine + putrescine = S-methyl-5'-thioadenosine + spermidine + H(+). It functions in the pathway amine and polyamine biosynthesis; spermidine biosynthesis; spermidine from putrescine: step 1/1. Functionally, catalyzes the irreversible transfer of a propylamine group from the amino donor S-adenosylmethioninamine (decarboxy-AdoMet) to putrescine (1,4-diaminobutane) to yield spermidine. The chain is Polyamine aminopropyltransferase from Salmonella typhi.